Reading from the N-terminus, the 549-residue chain is MRRSPSRSNNNFAVPNCSTNSNSSQQQLTTPSDDLNSNEPNDPDDSRSLPTIKKFNNKHSINNYNTLASAGKNNNNKRASNDNLLIPGENAHKQKIYTKDENLKSLYLDIDVSVAKALSSSATAPKLINTARTSSTTTATTSNNILTSPSYRESNYSSPSSYSFSSYYSSATSASSSTSSFLKSSGLSSRVKSPSSSVKAGSFGAPSSPTSGIPNPKSSKKPIFLRRYSHDTSSNEGLDIDVAIEKLLQVGESREITKTSKKKNFPFHSWEIQLICYHAREIFLNQPTLLRLQAPIKVVGDVHGQFNDLLRILKLSGVPSDTNYLFLGDYVDRGKNSLETILLLLCYKIKYKDNFFMLRGNHESANVTKMYGFYDECKRRLSSKVWKMFVDVFNTLPLAAIIQDKIFCVHGGISPDLHDMKQIEKVARPTDIPESGLVTDLLWSDPDPQVTDWSENDRGVSYTFSKRNVLDFCAKFKFDLILRGHMVVEDGYEFFARKKFVTIFSAPNYCGEFHNWGAVMSVTTGMMCSFELLKPRALKNKKKLYKTKV.

Polar residues predominate over residues 1 to 13 (MRRSPSRSNNNFA). Disordered regions lie at residues 1 to 50 (MRRS…RSLP), 64 to 85 (YNTL…DNLL), 133 to 158 (TSST…NYSS), and 189 to 219 (SRVK…PKSS). Low complexity-rich tracts occupy residues 16-32 (NCST…TTPS) and 68-83 (ASAG…SNDN). Residues 205 to 217 (APSSPTSGIPNPK) are compositionally biased toward polar residues. Mn(2+) is bound by residues D301, H303, D329, and N361. H362 functions as the Proton donor in the catalytic mechanism. The Mn(2+) site is built by H410 and H485.

Belongs to the PPP phosphatase family. PP-Z subfamily. Mn(2+) serves as cofactor.

The enzyme catalyses O-phospho-L-seryl-[protein] + H2O = L-seryl-[protein] + phosphate. It carries out the reaction O-phospho-L-threonyl-[protein] + H2O = L-threonyl-[protein] + phosphate. Functionally, phosphatase involved in the regulation of protein synthesis. Affects translational accuracy. The protein is Serine/threonine-protein phosphatase PPQ (PPQ1) of Saccharomyces cerevisiae (strain ATCC 204508 / S288c) (Baker's yeast).